Reading from the N-terminus, the 753-residue chain is Glycerophosphodiester phosphodiesterase GDPDL6 (753 aa).

The N-terminal stretch at 1 to 17 (MLRFFILFSLFLHSSVA) is a signal peptide. 2 consecutive GP-PDE domains span residues 41 to 339 (PAVV…SQSI) and 355 to 654 (ALVI…TRYL). N-linked (GlcNAc...) asparagine glycans are attached at residues Asn304, Asn516, Asn603, and Asn715. Positions 707 to 729 (PPVAKLASNGTEGGPPQTPPRSG) are disordered. Residues 731–751 (VAIAANLSLSLLAMMALGLLY) form a helical membrane-spanning segment.

Belongs to the glycerophosphoryl diester phosphodiesterase family. As to expression, expressed in flowers and siliques.

It localises to the membrane. It carries out the reaction a sn-glycero-3-phosphodiester + H2O = an alcohol + sn-glycerol 3-phosphate + H(+). The sequence is that of Glycerophosphodiester phosphodiesterase GDPDL6 from Arabidopsis thaliana (Mouse-ear cress).